We begin with the raw amino-acid sequence, 413 residues long: Eukaryotic initiation factor 4A-11 (413 aa).

A Q motif motif is present at residues 40–68 (ESFDAMGLQENLLRGIYAYGFEKPSAIQQ). Positions 71-241 (IVPFCKGLDV…RKFMNKPVRI (171 aa)) constitute a Helicase ATP-binding domain. An ATP-binding site is contributed by 84 to 91 (AQSGTGKT). A DEAD box motif is present at residues 189–192 (DEAD). Residues 252 to 413 (GIKQFYVNVD…ELPANVADLL (162 aa)) form the Helicase C-terminal domain.

This sequence belongs to the DEAD box helicase family. eIF4A subfamily. EIF4F is a multi-subunit complex, the composition of which varies with external and internal environmental conditions. It is composed of at least EIF4A, EIF4E and EIF4G.

It catalyses the reaction ATP + H2O = ADP + phosphate + H(+). Functionally, ATP-dependent RNA helicase which is a subunit of the eIF4F complex involved in cap recognition and is required for mRNA binding to ribosome. In the current model of translation initiation, eIF4A unwinds RNA secondary structures in the 5'-UTR of mRNAs which is necessary to allow efficient binding of the small ribosomal subunit, and subsequent scanning for the initiator codon. The chain is Eukaryotic initiation factor 4A-11 from Nicotiana tabacum (Common tobacco).